The sequence spans 807 residues: Probable phosphoketolase (807 aa).

The protein belongs to the XFP family. Thiamine diphosphate is required as a cofactor.

The polypeptide is Probable phosphoketolase (Nitrosospira multiformis (strain ATCC 25196 / NCIMB 11849 / C 71)).